Consider the following 265-residue polypeptide: uncharacterized protein (265 aa).

E47 is an active-site residue.

Belongs to the PhzF family.

This is an uncharacterized protein from Halalkalibacterium halodurans (strain ATCC BAA-125 / DSM 18197 / FERM 7344 / JCM 9153 / C-125) (Bacillus halodurans).